The sequence spans 206 residues: Ion-translocating oxidoreductase complex subunit G (206 aa).

The chain crosses the membrane as a helical span at residues 9-29 (GITLALFAAGSTGLTAVINQM). Position 174 is an FMN phosphoryl threonine (T174).

It belongs to the RnfG family. The complex is composed of six subunits: RsxA, RsxB, RsxC, RsxD, RsxE and RsxG. It depends on FMN as a cofactor.

The protein localises to the cell inner membrane. Its function is as follows. Part of a membrane-bound complex that couples electron transfer with translocation of ions across the membrane. Required to maintain the reduced state of SoxR. The protein is Ion-translocating oxidoreductase complex subunit G of Salmonella typhimurium (strain LT2 / SGSC1412 / ATCC 700720).